The following is a 159-amino-acid chain: MIIKIISVGKLKQTGFVNLVNDYLKRINYYLKCQEIVVNDEPEPTQISTKLLEQIKDKEANRILKNINQNDFVIALIIEGKIISSEMLAENLQNWLNASYPNICFVIGGSNGLHEKIYERANYHLSLSKMTFAHGLAKVMVCEQIYRALSILNNGKYHK.

Residues leucine 76, glycine 108, and leucine 127 to phenylalanine 132 each bind S-adenosyl-L-methionine.

Belongs to the RNA methyltransferase RlmH family. In terms of assembly, homodimer.

It is found in the cytoplasm. It carries out the reaction pseudouridine(1915) in 23S rRNA + S-adenosyl-L-methionine = N(3)-methylpseudouridine(1915) in 23S rRNA + S-adenosyl-L-homocysteine + H(+). Its function is as follows. Specifically methylates the pseudouridine at position 1915 (m3Psi1915) in 23S rRNA. This is Ribosomal RNA large subunit methyltransferase H from Ureaplasma urealyticum serovar 10 (strain ATCC 33699 / Western).